Reading from the N-terminus, the 333-residue chain is Acetyltransferase Pat (333 aa).

3',5'-cyclic AMP-binding positions include 85–88 (GEIA), 95–96 (RT), and R135. Residues 153 to 317 (FYLRPVLPGD…DTVPFEPELI (165 aa)) enclose the N-acetyltransferase domain. E211 contacts Mg(2+). Substrate contacts are provided by residues 237-239 (FTV), 245-250 (GRGIGS), N276, and R285.

As to quaternary structure, homodimer. Mg(2+) is required as a cofactor.

Allosterically regulated by cAMP. In terms of biological role, catalyzes specifically the acetylation of the epsilon-amino group of a highly conserved lysine residue in acetyl-CoA synthetase (ACS) and of the universal stress protein (USP) MSMEG_4207. Acetylation results in the inactivation of ACS activity and could be important for mycobacteria to adjust to environmental changes. This is Acetyltransferase Pat from Mycolicibacterium smegmatis (strain ATCC 700084 / mc(2)155) (Mycobacterium smegmatis).